The chain runs to 290 residues: Sodium/potassium-transporting ATPase subunit beta-2 (290 aa).

At 1–39 the chain is on the cytoplasmic side; sequence MVIQKEKKSCGQVVEEWKEFVWNPRTHQFMGRTGTSWAF. Residues 40-67 form a helical; Signal-anchor for type II membrane protein membrane-spanning segment; it reads ILLFYLVFYGFLTAMFTLTMWVMLQTVS. Topologically, residues 68-290 are extracellular; sequence DHTPKYQDRL…VAFKLRINKT (223 aa). Asparagine 96 and asparagine 118 each carry an N-linked (GlcNAc...) asparagine glycan. An intrachain disulfide couples cysteine 129 to cysteine 150. Residues asparagine 153 and asparagine 159 are each glycosylated (N-linked (GlcNAc...) asparagine). A disulfide bond links cysteine 160 and cysteine 177. 3 N-linked (GlcNAc...) asparagine glycosylation sites follow: asparagine 193, asparagine 197, and asparagine 238. The interval 193–290 is immunoglobulin-like; that stretch reads NQSMNVTCAG…VAFKLRINKT (98 aa). Cysteine 200 and cysteine 261 form a disulfide bridge.

Belongs to the X(+)/potassium ATPases subunit beta family. In terms of assembly, the sodium/potassium-transporting ATPase is composed of a catalytic alpha subunit, an auxiliary non-catalytic beta subunit and an additional regulatory subunit. Interacts with BSG.

It localises to the cell membrane. In terms of biological role, this is the non-catalytic component of the active enzyme, which catalyzes the hydrolysis of ATP coupled with the exchange of Na(+) and K(+) ions across the plasma membrane. The exact function of the beta-2 subunit is not known. Mediates cell adhesion of neurons and astrocytes, and promotes neurite outgrowth. The chain is Sodium/potassium-transporting ATPase subunit beta-2 (ATP1B2) from Ochotona curzoniae (Black-lipped pika).